The primary structure comprises 300 residues: uncharacterized protein (300 aa).

This is an uncharacterized protein from Methanocaldococcus jannaschii (strain ATCC 43067 / DSM 2661 / JAL-1 / JCM 10045 / NBRC 100440) (Methanococcus jannaschii).